The following is a 389-amino-acid chain: GDSL esterase/lipase At5g14450 (389 aa).

Positions 1–30 are cleaved as a signal peptide; that stretch reads MKDNLERAKLMVSSTVFSWLLLCLFAVTTS. Catalysis depends on serine 48, which acts as the Nucleophile. N-linked (GlcNAc...) asparagine glycans are attached at residues asparagine 125 and asparagine 335. Residues aspartate 354 and histidine 357 contribute to the active site.

The protein belongs to the 'GDSL' lipolytic enzyme family.

The protein localises to the secreted. This Arabidopsis thaliana (Mouse-ear cress) protein is GDSL esterase/lipase At5g14450.